Consider the following 1401-residue polypeptide: Protein dispatched homolog 2 (1401 aa).

Disordered regions lie at residues 1–91 (MDGD…LAPA) and 113–138 (DRAA…GTWK). The helical transmembrane segment at 170 to 190 (VAVLMLCLAVIFLCTLAGLLG) threads the bilayer. An N-linked (GlcNAc...) asparagine glycan is attached at N239. Positions 241–264 (SSSHNTLRPAPRGSAQESAVRPRR) are disordered. 2 N-linked (GlcNAc...) asparagine glycosylation sites follow: N349 and N465. The SSD domain occupies 471-643 (GMDLGLKQEL…LVWLPASAVL (173 aa)). Helical transmembrane passes span 484 to 504 (FLVQ…FGMA), 510 to 530 (LFLT…AFFL), 542 to 562 (FVNL…TLIF), 589 to 609 (FGYL…ASYL), 617 to 637 (CLAL…LVWL), 704 to 724 (YIWI…AGVS), 964 to 984 (PAVV…LGTW), 990 to 1010 (LFSV…LVLL), 1019 to 1039 (ALFL…YCIS), 1064 to 1084 (AVGA…TVLL), and 1088 to 1108 (LGII…FFFQ). 3 disordered regions span residues 1169–1192 (ARRR…PSVL), 1229–1337 (PALQ…NGKR), and 1352–1401 (SLPA…GYSS). Positions 1175–1184 (SFDTSTATSK) are enriched in polar residues. Over residues 1259–1270 (PLPASPEAPAHS) the composition is skewed to low complexity. The span at 1284–1305 (SSASTLEGLSVSDETCLSTSEP) shows a compositional bias: polar residues. Over residues 1352–1362 (SLPASHHSSLS) the composition is skewed to low complexity. Residue R1366 is modified to Omega-N-methylarginine.

Belongs to the dispatched family.

The protein localises to the membrane. In Homo sapiens (Human), this protein is Protein dispatched homolog 2.